The following is a 250-amino-acid chain: Probable replication-associated protein repA2 (250 aa).

It belongs to the IncFII RepA family.

In terms of biological role, this protein is essential for plasmid replication; it is involved in copy control functions. The polypeptide is Probable replication-associated protein repA2 (repA2) (Buchnera aphidicola subsp. Schizaphis graminum (strain Sg)).